A 333-amino-acid polypeptide reads, in one-letter code: Electron transfer flavoprotein subunit alpha, mitochondrial (333 aa).

The N-terminal 19 residues, 1 to 19, are a transit peptide targeting the mitochondrion; sequence MFRAAAPGQLRRAASLLRF. The segment at 20-204 is domain I; it reads QSTLVIAEHA…EISEWLDQKL (185 aa). Lys59 bears the N6-acetyllysine; alternate mark. Lys59 bears the N6-succinyllysine; alternate mark. Lys62 bears the N6-acetyllysine mark. Position 69 is an N6-acetyllysine; alternate (Lys69). Position 69 is an N6-succinyllysine; alternate (Lys69). The residue at position 75 (Lys75) is an N6-acetyllysine. Thr93 carries the phosphothreonine modification. Lys101 and Lys139 each carry N6-acetyllysine. Ser140 carries the phosphoserine modification. Lys158 is modified (N6-acetyllysine; alternate). N6-succinyllysine; alternate is present on Lys158. Lys164 is modified (N6-acetyllysine). At Lys187 the chain carries N6-succinyllysine. Lys203 carries the post-translational modification N6-acetyllysine; alternate. At Lys203 the chain carries N6-succinyllysine; alternate. A domain II region spans residues 205–333; that stretch reads TKSDRPELTG…PEMTEILKKK (129 aa). At Lys216 the chain carries N6-succinyllysine. Arg223 serves as a coordination point for FAD. Lys226 and Lys232 each carry N6-acetyllysine; alternate. N6-succinyllysine; alternate occurs at positions 226 and 232. FAD-binding positions include Ser248, 263-266, 281-286, and Asn300; these read VGQT and SGAIQH. Lys301 is modified (N6-succinyllysine). Residue 318-319 participates in FAD binding; sequence DL.

It belongs to the ETF alpha-subunit/FixB family. In terms of assembly, heterodimer composed of ETFA and ETFB. Identified in a complex that contains ETFA, ETFB and ETFRF1. Interaction with ETFRF1 promotes dissociation of the bound FAD and loss of electron transfer activity. Interacts with TASOR. Requires FAD as cofactor.

The protein localises to the mitochondrion matrix. Heterodimeric electron transfer flavoprotein that accepts electrons from several mitochondrial dehydrogenases, including acyl-CoA dehydrogenases, glutaryl-CoA and sarcosine dehydrogenase. It transfers the electrons to the main mitochondrial respiratory chain via ETF-ubiquinone oxidoreductase (ETF dehydrogenase). Required for normal mitochondrial fatty acid oxidation and normal amino acid metabolism. In Pongo abelii (Sumatran orangutan), this protein is Electron transfer flavoprotein subunit alpha, mitochondrial (ETFA).